A 76-amino-acid chain; its full sequence is Esculentin-2CG1 (76 aa).

An N-terminal signal peptide occupies residues 1–22 (MFTMKKSMLLLFFLGTISLSLC). Positions 23–37 (EEERSADEDDGEEEV) are cleaved as a propeptide — removed in mature form. A disulfide bond links Cys70 and Cys76.

As to expression, expressed by the skin glands.

It localises to the secreted. Its function is as follows. Antimicrobial peptide active against a variety of Gram-positive and some Gram-negative bacterial strains. Has antifungal activity against a slime mold isolate. Has hemolytic activity against human erythrocytes. The chain is Esculentin-2CG1 from Amolops chunganensis (Chungan torrent frog).